Here is a 407-residue protein sequence, read N- to C-terminus: Argininosuccinate synthase (407 aa).

ATP contacts are provided by residues A13–S21 and A40. Positions 91 and 96 each coordinate L-citrulline. G121 lines the ATP pocket. Residues T123, N127, and D128 each contribute to the L-aspartate site. N127 provides a ligand contact to L-citrulline. R131, S182, S191, E267, and Y279 together coordinate L-citrulline.

Belongs to the argininosuccinate synthase family. Type 1 subfamily. As to quaternary structure, homotetramer.

The protein localises to the cytoplasm. It carries out the reaction L-citrulline + L-aspartate + ATP = 2-(N(omega)-L-arginino)succinate + AMP + diphosphate + H(+). It participates in amino-acid biosynthesis; L-arginine biosynthesis; L-arginine from L-ornithine and carbamoyl phosphate: step 2/3. The chain is Argininosuccinate synthase from Rhizobium etli (strain ATCC 51251 / DSM 11541 / JCM 21823 / NBRC 15573 / CFN 42).